A 112-amino-acid chain; its full sequence is UPF0342 protein SPP_1392 (112 aa).

This sequence belongs to the UPF0342 family.

This chain is UPF0342 protein SPP_1392, found in Streptococcus pneumoniae (strain P1031).